Here is a 746-residue protein sequence, read N- to C-terminus: UvrABC system protein C (746 aa).

The GIY-YIG domain maps to alanine 18 to valine 97. The region spanning arginine 211–valine 246 is the UVR domain. The disordered stretch occupies residues alanine 557–proline 577.

Belongs to the UvrC family. Interacts with UvrB in an incision complex.

It is found in the cytoplasm. The UvrABC repair system catalyzes the recognition and processing of DNA lesions. UvrC both incises the 5' and 3' sides of the lesion. The N-terminal half is responsible for the 3' incision and the C-terminal half is responsible for the 5' incision. This is UvrABC system protein C from Bifidobacterium longum (strain DJO10A).